The sequence spans 260 residues: Phosphoribosylaminoimidazole-succinocarboxamide synthase (260 aa).

The protein belongs to the SAICAR synthetase family.

It carries out the reaction 5-amino-1-(5-phospho-D-ribosyl)imidazole-4-carboxylate + L-aspartate + ATP = (2S)-2-[5-amino-1-(5-phospho-beta-D-ribosyl)imidazole-4-carboxamido]succinate + ADP + phosphate + 2 H(+). The protein operates within purine metabolism; IMP biosynthesis via de novo pathway; 5-amino-1-(5-phospho-D-ribosyl)imidazole-4-carboxamide from 5-amino-1-(5-phospho-D-ribosyl)imidazole-4-carboxylate: step 1/2. The protein is Phosphoribosylaminoimidazole-succinocarboxamide synthase of Pelagibacter ubique (strain HTCC1062).